We begin with the raw amino-acid sequence, 229 residues long: Heptaprenylglyceryl phosphate synthase (229 aa).

Residue Lys-12 coordinates sn-glycerol 1-phosphate. Mg(2+) contacts are provided by Asp-14 and Ser-40. Residues 159–164, Gly-189, and 209–210 contribute to the sn-glycerol 1-phosphate site; these read YLEYSG and GN.

The protein belongs to the GGGP/HepGP synthase family. Group I subfamily. In terms of assembly, homodimer. Requires Mg(2+) as cofactor.

The enzyme catalyses sn-glycerol 1-phosphate + all-trans-heptaprenyl diphosphate = 3-heptaprenyl-sn-glycero-1-phosphate + diphosphate. The protein operates within membrane lipid metabolism; glycerophospholipid metabolism. In terms of biological role, prenyltransferase that catalyzes in vivo the transfer of the heptaprenyl moiety of heptaprenyl pyrophosphate (HepPP; 35 carbon atoms) to the C3 hydroxyl of sn-glycerol-1-phosphate (G1P), producing heptaprenylglyceryl phosphate (HepGP). This reaction is an ether-bond-formation step in the biosynthesis of archaea-type G1P-based membrane lipids found in Bacillales. The protein is Heptaprenylglyceryl phosphate synthase of Bacillus cytotoxicus (strain DSM 22905 / CIP 110041 / 391-98 / NVH 391-98).